A 317-amino-acid chain; its full sequence is Probable F-box protein At2g36090 (317 aa).

An F-box domain is found at Ile-25–Arg-74.

This Arabidopsis thaliana (Mouse-ear cress) protein is Probable F-box protein At2g36090.